Reading from the N-terminus, the 459-residue chain is Exodeoxyribonuclease 7 large subunit (459 aa).

Belongs to the XseA family. Heterooligomer composed of large and small subunits.

Its subcellular location is the cytoplasm. It carries out the reaction Exonucleolytic cleavage in either 5'- to 3'- or 3'- to 5'-direction to yield nucleoside 5'-phosphates.. Its function is as follows. Bidirectionally degrades single-stranded DNA into large acid-insoluble oligonucleotides, which are then degraded further into small acid-soluble oligonucleotides. This Pseudomonas fluorescens (strain ATCC BAA-477 / NRRL B-23932 / Pf-5) protein is Exodeoxyribonuclease 7 large subunit.